The chain runs to 433 residues: ATP-dependent protease ATPase subunit HslU (433 aa).

Residues Ile-18, 60 to 65, Asp-246, Glu-311, and Arg-383 contribute to the ATP site; that span reads GVGKTE.

The protein belongs to the ClpX chaperone family. HslU subfamily. A double ring-shaped homohexamer of HslV is capped on each side by a ring-shaped HslU homohexamer. The assembly of the HslU/HslV complex is dependent on binding of ATP.

Its subcellular location is the cytoplasm. Functionally, ATPase subunit of a proteasome-like degradation complex; this subunit has chaperone activity. The binding of ATP and its subsequent hydrolysis by HslU are essential for unfolding of protein substrates subsequently hydrolyzed by HslV. HslU recognizes the N-terminal part of its protein substrates and unfolds these before they are guided to HslV for hydrolysis. This is ATP-dependent protease ATPase subunit HslU from Cereibacter sphaeroides (strain KD131 / KCTC 12085) (Rhodobacter sphaeroides).